The following is a 207-amino-acid chain: LPS-assembly lipoprotein LptE (207 aa).

Residues 1-19 (MRHRILTLLLGLAVLVTAG) form the signal peptide. Cysteine 20 carries the N-palmitoyl cysteine lipid modification. The S-diacylglycerol cysteine moiety is linked to residue cysteine 20. The interval 168-207 (KNTQKNGDKPVSDANAAQGSTPTAVNETTLGEPAVSTSAK) is disordered. A compositionally biased stretch (polar residues) spans 182–207 (NAAQGSTPTAVNETTLGEPAVSTSAK).

Belongs to the LptE lipoprotein family. As to quaternary structure, component of the lipopolysaccharide transport and assembly complex. Interacts with LptD.

It localises to the cell outer membrane. Functionally, together with LptD, is involved in the assembly of lipopolysaccharide (LPS) at the surface of the outer membrane. Required for the proper assembly of LptD. Binds LPS and may serve as the LPS recognition site at the outer membrane. The protein is LPS-assembly lipoprotein LptE of Yersinia pseudotuberculosis serotype O:1b (strain IP 31758).